Reading from the N-terminus, the 106-residue chain is YcgL domain-containing protein HCH_02617 (106 aa).

The 85-residue stretch at 6 to 90 (RLISIFRSSK…VQDDYMMDVV (85 aa)) folds into the YcgL domain.

The protein is YcgL domain-containing protein HCH_02617 of Hahella chejuensis (strain KCTC 2396).